The chain runs to 1698 residues: MPAEIKPSAPAEPETPTKSKPKSSSSSHGKPALARVTLLDGSLLDVSIDRKAIGRDVINSICAGLNLIEKDYFGLTYETPTDPRTWLDLEKPVSKFFRTDTWPLTFAVKFYPPEPSQLKEDITRYHLCLQVRNDILEGRLPCTFVTHALLGSYLVQSEMGDYDAEEMPTRAYLKDFKIAPNQTAELEDKVMDLHKTHKGQSPAEAELHYLENAKKLAMYGVDLHPAKDSEGVDIMLGVCASGLLVYRDKLRINRFAWPKILKISYKRHHFYIKIRPGEFEQYESTIGFKLANHRAAKKLWKSCVEHHTFFRLMTPEPVSKSKMFPVFGSTYRYKGRTQAESTNTPVDRTPPKFNRTLSGARLTSRSMDALALAEKEKVARKSSTLDHRGDRNADGDAHSRSPIKNKKEKDADKEAKLREKKQKEKEEKERKEREKRELEEKKKAEKAAKAALAAGAAAGAAVNGNDELNDSNKSDKSSGRRGVGIFSSGRKSKSGSPSKDGKDKSGKDKDKEVGRLGLVVTSGLGDNQQDQNLDEAARNAAKNRGSTTPGVTRQYEYAVDNDGNTSPTRKSYTPGGFRYDQDPNSRKSGADGQEQLSPTSQQKKIGLAFNYAPGNENALKETAEKLKAGQLSPRTQDKLNRGQLSPKSRAKLLQDPLLSPTTRAKLQGSAVDAAAVPLSDSQKRSYSPTKGPQGYSSGAPGSYKPISDPTADFLESQRYNKEPGYVGPSKADVAAGLAGAAGSKKPGSPTKTGKGAPGAAAAAAAGAAGAAAAAAKPKKRRVKIMVITSKFDPSTKRIDAENGSIEHSTGILDPATGLIDTKYGVIDPKKGTLEALNTKTGKKEVFQGDVDGKTGNLHLVSGVADPKTGRLDDTLGQIVCITPQDNPVVELTVITSRIDPATGKIDTVNGDVERSLGVLNLDTGLLDTKYGEINTRTGELKAIDPKSGKIVVSKNVKVDPGTGQITILGIVDPKTNKIDPNQGRLIEVGQQIDPIVEVTSLAGKFDSKRNIIDPKTAQVETSGGQFDPKAGKIDTKYGQIDLVKHTITFNDPKSGKTVTRDIKIEPTTGQIVLKNQVNPKNNKPDKDYARIISLRIVQQRVDPATKAPITEVSASKDKDIVVDPKSNQIWVPTGATDPATKEQQYISSSVDPKTGYVITIYGYLDPKTNEIKKQTKLDPNTIKIEPTSGKIYTATGEVDQATGEPLYAATQVDPESGEVYTKLARVDPKTGKIVIVRILLISKTDERGRPEEIDPSTCEIDPVSGRVLKFFNKTVYVYNMIDPVTGEIVQVDPNDPRFAGARTTVTHTMTLTGEIDPVTGRIKSEYGDIDPNTGDIDPATAVTDPVTGKLILNYAQIDPSHFGKQAQVQTTTETVPITRQQFFDGVKHISKGALRRDSEGSSDDDMTAQYGADQVNEILIGSPAGQAGGKLGKPVSTPTVVKTTTKQVLTKNIDGVTHNVEEEVRNLGTGEVTYSTQEHKADATPTDLSGAYVTATAVTTRTATTHEDLGKNAKTEQLEEKTVATTRTHDPNKQQQRVVTQEVKTTATVTSGDQYQRRDSVSSTSSGDSGTPIDGPYDGASVVRTDNQKSPLFTTSATTGPHVESTRVVLGEDTPGFSGHGEIISTQTVSSKTRTVETITYKTERDGIVETRVEQKITIQSDGDPIDHDKALAEAIQEATAMNPDMTVEKIEIQQQTQ.

Residues 1–31 (MPAEIKPSAPAEPETPTKSKPKSSSSSHGKP) form a disordered region. Residues 12–27 (EPETPTKSKPKSSSSS) are compositionally biased toward low complexity. The FERM domain maps to 32 to 314 (ALARVTLLDG…EHHTFFRLMT (283 aa)). A hydrophilic region spans residues 317–434 (PVSKSKMFPV…KEEKERKERE (118 aa)). 2 disordered regions span residues 335-361 (GRTQ…SGAR) and 374-710 (EKEK…SDPT). Residues 374-448 (EKEKVARKSS…EEKKKAEKAA (75 aa)) are compositionally biased toward basic and acidic residues. Residues 449–461 (KAALAAGAAAGAA) are compositionally biased toward low complexity. A phosphoserine mark is found at Ser-471, Ser-474, and Ser-478. The segment covering 499–514 (KDGKDKSGKDKDKEVG) has biased composition (basic and acidic residues). Over residues 562–571 (DGNTSPTRKS) the composition is skewed to polar residues. Ser-566 bears the Phosphoserine mark. Residues 579–589 (YDQDPNSRKSG) are compositionally biased toward basic and acidic residues. Over residues 594-603 (EQLSPTSQQK) the composition is skewed to polar residues. Residues 618–627 (ALKETAEKLK) are compositionally biased toward basic and acidic residues. Ser-659 and Ser-687 each carry phosphoserine. Over residues 684 to 696 (RSYSPTKGPQGYS) the composition is skewed to polar residues. Thr-689 carries the phosphothreonine modification. Ser-697, Ser-1398, Ser-1401, and Ser-1402 each carry phosphoserine. The interval 1286-1698 (GEIVQVDPND…EKIEIQQQTQ (413 aa)) is C-terminal (CTD). Phosphothreonine is present on Thr-1407. Residues 1509–1532 (LGKNAKTEQLEEKTVATTRTHDPN) show a composition bias toward basic and acidic residues. The segment at 1509 to 1599 (LGKNAKTEQL…SPLFTTSATT (91 aa)) is disordered. Positions 1533-1554 (KQQQRVVTQEVKTTATVTSGDQ) are enriched in polar residues. A compositionally biased stretch (low complexity) spans 1561-1571 (VSSTSSGDSGT). Residues 1584-1599 (RTDNQKSPLFTTSATT) are compositionally biased toward polar residues. A Phosphoserine modification is found at Ser-1590.

At onset of germ band retraction, expression is seen in epidermis, hindgut and foregut. During retraction, expression extends to tracheal branches and salivary glands.

It is found in the cell junction. The protein localises to the septate junction. In terms of biological role, an integral component of the septate junction. May play a role in cell-cell interactions that are necessary for proper development. Vital for embryonic development. This is Protein 4.1 homolog (cora) from Drosophila melanogaster (Fruit fly).